A 359-amino-acid polypeptide reads, in one-letter code: Structure-specific endonuclease subunit SLX1 homolog (359 aa).

Residues Gly9–Asn91 enclose the GIY-YIG domain. The SLX1-type zinc-finger motif lies at Cys192–Cys238. The interval Val256 to Asp359 is disordered. The span at Val269–Tyr281 shows a compositional bias: polar residues. Over residues Glu295 to Ser306 the composition is skewed to basic and acidic residues. A compositionally biased stretch (low complexity) spans Ser316 to Ser326.

Belongs to the SLX1 family. As to quaternary structure, forms a heterodimer with a member of the SLX4 family. A divalent metal cation serves as cofactor.

It is found in the nucleus. In terms of biological role, catalytic subunit of a heterodimeric structure-specific endonuclease that resolves DNA secondary structures generated during DNA repair and recombination. Has endonuclease activity towards branched DNA substrates, introducing single-strand cuts in duplex DNA close to junctions with ss-DNA. This is Structure-specific endonuclease subunit SLX1 homolog from Giardia intestinalis (strain ATCC 50803 / WB clone C6) (Giardia lamblia).